We begin with the raw amino-acid sequence, 779 residues long: MGSFPLAEFPLRDIPVPYSYRVSGGIASSGSVTALVTAAGTHRNSSTAKTVETEDGEEDIDEYQRKRAAGSGESTPERSDFKRVKHDNHKTLHPVNLQNTGAASVDNDGLHNLTDISNDAEKLLMSVDDGSAAPSTLSVNMGVASHNVAAPTTVNAATITGSDVSNNVNSATINNPMEEGALPLSPTASSPGTTTPLAKTTKTINNNNNIADLIESKDSIISPEYLSDEIFSAINNNLPHAYFKNLLFRLVANMDRSELSDLGTLIKDNLKRDLITSLPFEISLKIFNYLQFEDIINSLGVSQNWNKIIRKSTSLWKKLLISENFVSPKGFNSLNLKLSQKYPKLSQQDRLRLSFLENIFILKNWYNPKFVPQRTTLRGHMTSVITCLQFEDNYVITGADDKMIRVYDSINKKFLLQLSGHDGGVWALKYAHGGILVSGSTDRTVRVWDIKKGCCTHVFKGHNSTVRCLDIVEYKNIKYIVTGSRDNTLHVWKLPKESSVPDHGEEHDYPLVFHTPEENPYFVGVLRGHMASVRTVSGHGNIVVSGSYDNTLIVWDVAQMKCLYILSGHTDRIYSTIYDHERKRCISASMDTTIRIWDLENIWNNGECSYATNSASPCAKILGAMYTLQGHTALVGLLRLSDKFLVSAAADGSIRGWDANDYSRKFSYHHTNLSAITTFYVSDNILVSGSENQFNIYNLRSGKLVHANILKDADQIWSVNFKGKTLVAAVEKDGQSFLEILDFSKASKINYVSNPVNSSSSSLESISTSLGLTRTTIIP.

Positions 39–80 (AGTHRNSSTAKTVETEDGEEDIDEYQRKRAAGSGESTPERSD) are disordered. The short motif at 82 to 85 (KRVK) is the Nuclear localization signal element. At Ser-104 the chain carries Phosphoserine. Residues 272–319 (RDLITSLPFEISLKIFNYLQFEDIINSLGVSQNWNKIIRKSTSLWKKL) form the F-box domain. WD repeat units lie at residues 380–408 (HMTS…RVYD), 420–449 (GHDG…RVWD), 461–493 (GHNS…HVWK), 528–556 (GHMA…IVWD), 568–598 (GHTD…RIWD), 630–658 (GHTA…RGWD), and 669–698 (HHTN…NIYN).

In terms of assembly, interacts with DCD53 and SKP1. Component of the SCF(CDC4) complex containing CDC53, SKP1, RBX1 and CDC4. CDC34. Interacts with CDC6 and CIC1. Interacts with SIC1; the interaction involves a SIC1 double phosphorylated motif (degron). Homodimerizes; the dimerization increases SIC1 ubiquitination in vitro.

The protein localises to the nucleus. It functions in the pathway protein modification; protein ubiquitination. Its function is as follows. Substrate recognition component of a SCF (SKP1-CUL1-F-box protein) E3 ubiquitin-protein ligase complex which mediates the ubiquitination and subsequent proteasomal degradation of target proteins. Recognizes and binds to phosphorylated target proteins. Directs ubiquitination of the phosphorylated CDK inhibitor SIC1. Involved in the degradation of CDC6 together with CDC34/UBC3 and CDC53, and in restricting the degradation of FAR1 to the nucleus. Is essential for initiation of DNA replication and separation of the spindle pole bodies to form the poles of the mitotic spindle. It also plays a role in bud development, fusion of zygotic nuclei after conjugation and various aspects of sporulation. Required for HTA1-HTB1 locus transcription activation. Required for G1/S and G2/M transition. This Saccharomyces cerevisiae (strain ATCC 204508 / S288c) (Baker's yeast) protein is Cell division control protein 4 (CDC4).